A 160-amino-acid chain; its full sequence is Cytochrome b6-f complex subunit 4 (160 aa).

The next 3 membrane-spanning stretches (helical) occupy residues 36-56, 95-115, and 131-151; these read LLYV…GLAV, LLGV…PFIE, and LVFI…CLPI.

This sequence belongs to the cytochrome b family. PetD subfamily. In terms of assembly, the 4 large subunits of the cytochrome b6-f complex are cytochrome b6, subunit IV (17 kDa polypeptide, petD), cytochrome f and the Rieske protein, while the 4 small subunits are petG, petL, petM and petN. The complex functions as a dimer.

Its subcellular location is the plastid. It is found in the chloroplast thylakoid membrane. Functionally, component of the cytochrome b6-f complex, which mediates electron transfer between photosystem II (PSII) and photosystem I (PSI), cyclic electron flow around PSI, and state transitions. The sequence is that of Cytochrome b6-f complex subunit 4 from Trieres chinensis (Marine centric diatom).